The chain runs to 431 residues: E3 ubiquitin-protein ligase RNF128 (431 aa).

The first 38 residues, 1-38 (MGQLPGAGVFCRGGCGFSRLLAWCFLLVLSPQTPGSRG), serve as a signal peptide directing secretion. N-linked (GlcNAc...) asparagine glycans are attached at residues N48, N59, and N101. Residues 75–186 (SPLEPVAGVL…LKGTKILQSI (112 aa)) form the PA domain. A helical membrane pass occupies residues 211-231 (IFFVSVSFFIITAATVGYFIF). The RING-type; atypical zinc finger occupies 280–321 (CAVCIELYKPNDLVRILTCNHVFHKTCVDPWLLEHRTCPMCK). Positions 345 to 354 (VSNETSSNAS) are enriched in polar residues. The segment at 345-431 (VSNETSSNAS…QETTVREIKS (87 aa)) is disordered.

Auto-ubiquitinated. Controls the development of T-cell clonal anergy by ubiquitination.

The protein resides in the cytoplasm. Its subcellular location is the endomembrane system. It is found in the cytoskeleton. It localises to the perinuclear region. It carries out the reaction S-ubiquitinyl-[E2 ubiquitin-conjugating enzyme]-L-cysteine + [acceptor protein]-L-lysine = [E2 ubiquitin-conjugating enzyme]-L-cysteine + N(6)-ubiquitinyl-[acceptor protein]-L-lysine.. It participates in protein modification; protein ubiquitination. Its function is as follows. E3 ubiquitin-protein ligase that catalyzes 'Lys-27', 'Lys-48'- or 'Lys-63'-linked polyubiquitin chains formation and plays a role in different biological processes such as modulation of immune response, cytoskeletal dynamics or protein homeostasis. Inhibits IL2 and IL4 transcription, thereby playing an important role in the induction of the anergic phenotype, a long-term stable state of T-lymphocyte unresponsiveness to antigenic stimulation associated with the blockade of interleukin production. Ubiquitinates ARPC5 with 'Lys-48' linkages and COR1A with 'Lys-63' linkages leading to their degradation, down-regulation of these cytoskeletal components results in impaired lamellipodium formation and reduced accumulation of F-actin at the immunological synapse. Functions in the patterning of the dorsal ectoderm; sensitizes ectoderm to respond to neural-inducing signals. Plays a positive role in innate immune response by promoting 'Lys-63'-linked ubiquitination of TBK1 after RNA- or DNA-virus infection. Regulates alveolar macrophage activation and neutrophil infiltration by interacting with TLR4, targeting it for degradation, and inhibiting NF-kappa-B activation, hence decreasing pro-inflammatory cytokines. Negatively regulates the IL-3/STAT5 signaling pathway by facilitating 'Lys-27'-linked polyubiquitination of IL3RA leading to its degradation via lysosomal pathway. Directly regulates the N-glycosylation process in the endoplasmic reticulum by targeting the glycosyl-transferase RPN1 for ubiquitination and degradation. Other substrates targeted for degradation by RNF128 include transmembrane proteins CD40L, CD83 or the tetraspanin CD151. This is E3 ubiquitin-protein ligase RNF128 (RNF128) from Bos taurus (Bovine).